The chain runs to 572 residues: MRTSQYLLSTLKETPADAEVISHQLMLRAGMIRKLASGLYTWLPTGVRVLKKVENIVREEMNNAGAIEVLMPVVQPSELWQESGRWEQYGPELLRIADRGDRPFVLGPTHEEVITDLIRNELNSYKQLPLNFYQIQTKFRDEVRPRFGVMRSREFLMKDAYSFHTSQESLQETYDAMYTAYSKIFSRMGLDFRAVQADTGSIGGSASHEFQVLAQSGEDDVIFSDSSDYAANIEFAEAVAPKEPRAAATQEMTLVDTPNAKTIAELVEQFDLPIEKTVKTLLVKAVEGSASPLIALLVRGDHELNEVKAEKLPQVASPLTFATEEEIRALVKAGPGSLGPVNLPIPVVIDRTVAVMSDFAAGANIDGKHYFGINWDRDVATPEVADIRNVVAGDPSPDGKGTLLIKRGIEVGHIFQLGTKYSQAMNAAVQGEDGRNQILTMGCYGIGVTRVVAAAIEQNFDDRGIIWPDAIAPFQVAILPMNMHKSYRVQELAEKLYAELRAHGIDVLMDDRKERPGVMFADMELIGIPHTIVLGDRNLDNDDIEYKYRRNGEKQLIKTGDIVEYLVKAIKG.

This sequence belongs to the class-II aminoacyl-tRNA synthetase family. ProS type 1 subfamily. In terms of assembly, homodimer.

The protein resides in the cytoplasm. The enzyme catalyses tRNA(Pro) + L-proline + ATP = L-prolyl-tRNA(Pro) + AMP + diphosphate. In terms of biological role, catalyzes the attachment of proline to tRNA(Pro) in a two-step reaction: proline is first activated by ATP to form Pro-AMP and then transferred to the acceptor end of tRNA(Pro). As ProRS can inadvertently accommodate and process non-cognate amino acids such as alanine and cysteine, to avoid such errors it has two additional distinct editing activities against alanine. One activity is designated as 'pretransfer' editing and involves the tRNA(Pro)-independent hydrolysis of activated Ala-AMP. The other activity is designated 'posttransfer' editing and involves deacylation of mischarged Ala-tRNA(Pro). The misacylated Cys-tRNA(Pro) is not edited by ProRS. This Klebsiella pneumoniae (strain 342) protein is Proline--tRNA ligase.